The chain runs to 88 residues: MAEAEKTVRTLTGRVVSDKMDKTITVLIERRVKHPIYGKYVKRSTKLHAHDETNQCHIGDKVTIRETRPLAKTKSWALVDVLERAVEV.

It belongs to the universal ribosomal protein uS17 family. Part of the 30S ribosomal subunit.

In terms of biological role, one of the primary rRNA binding proteins, it binds specifically to the 5'-end of 16S ribosomal RNA. The polypeptide is Small ribosomal subunit protein uS17 (Pseudomonas fluorescens (strain SBW25)).